The primary structure comprises 229 residues: Putative N-acetylmannosamine-6-phosphate 2-epimerase (229 aa).

This sequence belongs to the NanE family.

It carries out the reaction an N-acyl-D-glucosamine 6-phosphate = an N-acyl-D-mannosamine 6-phosphate. Its pathway is amino-sugar metabolism; N-acetylneuraminate degradation; D-fructose 6-phosphate from N-acetylneuraminate: step 3/5. In terms of biological role, converts N-acetylmannosamine-6-phosphate (ManNAc-6-P) to N-acetylglucosamine-6-phosphate (GlcNAc-6-P). The sequence is that of Putative N-acetylmannosamine-6-phosphate 2-epimerase from Escherichia fergusonii (strain ATCC 35469 / DSM 13698 / CCUG 18766 / IAM 14443 / JCM 21226 / LMG 7866 / NBRC 102419 / NCTC 12128 / CDC 0568-73).